Consider the following 655-residue polypeptide: Probable replication factor A 73 kDa subunit (655 aa).

The segment at 195 to 217 is disordered; that stretch reads NRAAAPEATRARAVPPPARRTAS. Low complexity predominate over residues 196 to 207; it reads RAAAPEATRARA. Positions 236 to 326 form a DNA-binding region, OB; the sequence is FKIHGMVSRK…TLRSDSIIEA (91 aa). The segment at 518-539 adopts a C4-type zinc-finger fold; sequence CASEGCQKKLVGENGDYRCEKC.

The protein belongs to the replication factor A protein 1 family. As to quaternary structure, component of the heterotrimeric canonical replication protein A complex (RPA).

It is found in the nucleus. Its function is as follows. As part of the heterotrimeric replication protein A complex (RPA/RP-A), binds and stabilizes single-stranded DNA intermediates, that form during DNA replication or upon DNA stress. It prevents their reannealing and in parallel, recruits and activates different proteins and complexes involved in DNA metabolism. Thereby, it plays an essential role both in DNA replication and the cellular response to DNA damage. This Caenorhabditis elegans protein is Probable replication factor A 73 kDa subunit.